The primary structure comprises 233 residues: Octanoyltransferase (233 aa).

The BPL/LPL catalytic domain occupies 36–211 (DTTPDEIWLV…EFTRQLGYPT (176 aa)). Substrate contacts are provided by residues 75 to 82 (RGGQITYH), 142 to 144 (SLG), and 155 to 157 (GLA). The active-site Acyl-thioester intermediate is Cys173.

This sequence belongs to the LipB family.

The protein localises to the cytoplasm. It catalyses the reaction octanoyl-[ACP] + L-lysyl-[protein] = N(6)-octanoyl-L-lysyl-[protein] + holo-[ACP] + H(+). Its pathway is protein modification; protein lipoylation via endogenous pathway; protein N(6)-(lipoyl)lysine from octanoyl-[acyl-carrier-protein]: step 1/2. In terms of biological role, catalyzes the transfer of endogenously produced octanoic acid from octanoyl-acyl-carrier-protein onto the lipoyl domains of lipoate-dependent enzymes. Lipoyl-ACP can also act as a substrate although octanoyl-ACP is likely to be the physiological substrate. In Yersinia pseudotuberculosis serotype O:1b (strain IP 31758), this protein is Octanoyltransferase.